Reading from the N-terminus, the 185-residue chain is Ribosome-recycling factor (185 aa).

It belongs to the RRF family.

The protein localises to the cytoplasm. Responsible for the release of ribosomes from messenger RNA at the termination of protein biosynthesis. May increase the efficiency of translation by recycling ribosomes from one round of translation to another. The polypeptide is Ribosome-recycling factor (Clostridioides difficile (strain 630) (Peptoclostridium difficile)).